A 380-amino-acid chain; its full sequence is Cytochrome b (380 aa).

The next 4 helical transmembrane spans lie at 33–53, 77–98, 113–133, and 178–198; these read FGSLLGMCLMIQILTGLFLAM, WLIRYLHANGASMFFICLFIHV, WNIGIVLLLTTMATAFVGYVL, and FFAFHFILPFIITALVLVHLL. Heme b is bound by residues H83 and H97. Heme b contacts are provided by H182 and H196. A ubiquinone is bound at residue H201. 4 consecutive transmembrane segments (helical) span residues 226-246, 288-308, 320-340, and 347-367; these read IKDLLGALILLMVLMILVLFF, LGGVLALILSILILATLPLLN, ITQALYWIFVANLLTXTWIGG, and FTLIGXIASXLXFXIIIIFMP.

The protein belongs to the cytochrome b family. In terms of assembly, the cytochrome bc1 complex contains 11 subunits: 3 respiratory subunits (MT-CYB, CYC1 and UQCRFS1), 2 core proteins (UQCRC1 and UQCRC2) and 6 low-molecular weight proteins (UQCRH/QCR6, UQCRB/QCR7, UQCRQ/QCR8, UQCR10/QCR9, UQCR11/QCR10 and a cleavage product of UQCRFS1). This cytochrome bc1 complex then forms a dimer. Heme b is required as a cofactor.

The protein localises to the mitochondrion inner membrane. Component of the ubiquinol-cytochrome c reductase complex (complex III or cytochrome b-c1 complex) that is part of the mitochondrial respiratory chain. The b-c1 complex mediates electron transfer from ubiquinol to cytochrome c. Contributes to the generation of a proton gradient across the mitochondrial membrane that is then used for ATP synthesis. The chain is Cytochrome b (MT-CYB) from Rhipidomys wetzeli (Wetzel's climbing mouse).